The chain runs to 97 residues: Large ribosomal subunit protein eL21 (97 aa).

Residues 1-24 (MVQKPHSFRRKTRKKLRKHPRRRG) are compositionally biased toward basic residues. Residues 1–25 (MVQKPHSFRRKTRKKLRKHPRRRGL) form a disordered region.

This sequence belongs to the eukaryotic ribosomal protein eL21 family.

This Pyrococcus horikoshii (strain ATCC 700860 / DSM 12428 / JCM 9974 / NBRC 100139 / OT-3) protein is Large ribosomal subunit protein eL21 (rpl21e).